A 262-amino-acid polypeptide reads, in one-letter code: Ribosomal RNA small subunit methyltransferase A (262 aa).

6 residues coordinate S-adenosyl-L-methionine: Asn14, Leu16, Gly41, Glu62, Asp87, and Asn109.

Belongs to the class I-like SAM-binding methyltransferase superfamily. rRNA adenine N(6)-methyltransferase family. RsmA subfamily.

Its subcellular location is the cytoplasm. The catalysed reaction is adenosine(1518)/adenosine(1519) in 16S rRNA + 4 S-adenosyl-L-methionine = N(6)-dimethyladenosine(1518)/N(6)-dimethyladenosine(1519) in 16S rRNA + 4 S-adenosyl-L-homocysteine + 4 H(+). In terms of biological role, specifically dimethylates two adjacent adenosines (A1518 and A1519) in the loop of a conserved hairpin near the 3'-end of 16S rRNA in the 30S particle. May play a critical role in biogenesis of 30S subunits. In Francisella tularensis subsp. tularensis (strain FSC 198), this protein is Ribosomal RNA small subunit methyltransferase A.